Consider the following 446-residue polypeptide: Transcription factor Dp-2 (446 aa).

The residue at position 2 (T2) is an N-acetylthreonine. S24 carries the phosphoserine modification. An interaction with CEBPA region spans residues 60 to 82 (PQMIISTPQRLTSSGSVLIGSPY). A Nuclear localization signal motif is present at residues 103–118 (GDRKRARKFIDSDFSE). Position 122 is a phosphoserine (S122). The DNA-binding element occupies 129–210 (GKGLRHFSMK…KKEIKWIGLP (82 aa)). The DEF box signature appears at 176-210 (DQKNIRRRVYDALNVLMAMNIISKEKKEIKWIGLP). Residues 219-292 (NLEIEKQRRI…RKTVIDCSIS (74 aa)) are dimerization. A DCB1 region spans residues 229–261 (ERIKQKRAQLQELLLQQIAFKNLVQRNRQNEQQ). Residues 274 to 330 (LPFIIINTSRKTVIDCSISSDKFEYLFNFDNTFEIHDDIEVLKRMGMSFGLESGKCS) form a DCB2 region. Over residues 409–419 (SHQSSSAASHC) the composition is skewed to low complexity. The segment at 409–446 (SHQSSSAASHCSESRGETPCSFNDEDEEDDEEDSSSPE) is disordered. Acidic residues predominate over residues 431-446 (NDEDEEDDEEDSSSPE).

The protein belongs to the E2F/DP family. In terms of assembly, component of the DRTF1/E2F transcription factor complex. Forms heterodimers with E2F family members. The complex can interact with hypophosphorylated retinoblastoma protein RB1 and related proteins (RBL1 and RBL2) that inhibit the E2F transactivation domain. During the cell cycle, RB becomes phosphorylated in mid-to-late G1 phase, detaches from the DRTF1/E2F complex rendering E2F transcriptionally active. Viral oncoproteins, notably E1A, T-antigen and HPV E7, are capable of sequestering RB protein, thus releasing the active complex. Interacts with GMCL. Component of the DREAM complex (also named LINC complex) at least composed of E2F4, E2F5, LIN9, LIN37, LIN52, LIN54, MYBL1, MYBL2, RBL1, RBL2, RBBP4, TFDP1 and TFDP2. The complex exists in quiescent cells where it represses cell cycle-dependent genes. It dissociates in S phase when LIN9, LIN37, LIN52 and LIN54 form a subcomplex that binds to MYBL2. The complex TFDP2:E2F1 interacts with CEBPA; the interaction prevents CEBPA binding to target genes promoters and represses its transcriptional activity. Post-translationally, ser-24 is probably phosphorylated by CDK2. As to expression, high levels in heart and skeletal muscle. Also found in placenta, kidney, brain, lung and liver. The presence as well as the abundance of the different transcripts appear to vary significantly in different tissues and cell lines.

It is found in the nucleus. Its function is as follows. Can stimulate E2F-dependent transcription. Binds DNA cooperatively with E2F family members through the E2 recognition site, 5'-TTTC[CG]CGC-3', found in the promoter region of a number of genes whose products are involved in cell cycle regulation or in DNA replication. The TFDP2:E2F complex functions in the control of cell-cycle progression from G1 to S phase. The E2F1:DP complex appears to mediate both cell proliferation and apoptosis. Blocks adipocyte differentiation by repressing CEBPA binding to its target gene promoters. This Homo sapiens (Human) protein is Transcription factor Dp-2 (TFDP2).